A 187-amino-acid chain; its full sequence is Large ribosomal subunit protein uL10 (187 aa).

It belongs to the universal ribosomal protein uL10 family. In terms of assembly, part of the ribosomal stalk of the 50S ribosomal subunit. The N-terminus interacts with L11 and the large rRNA to form the base of the stalk. The C-terminus forms an elongated spine to which L12 dimers bind in a sequential fashion forming a multimeric L10(L12)X complex.

Forms part of the ribosomal stalk, playing a central role in the interaction of the ribosome with GTP-bound translation factors. In Synechococcus sp. (strain JA-2-3B'a(2-13)) (Cyanobacteria bacterium Yellowstone B-Prime), this protein is Large ribosomal subunit protein uL10.